The chain runs to 782 residues: Transcription factor Sp4 (782 aa).

3 disordered regions span residues 1-48 (MSDQ…PLAL), 107-148 (PPAS…TPNQ), and 275-385 (GGGT…QNAQ). A Phosphoserine modification is found at S44. Residues 107-119 (PPASKENNVSQPA) are compositionally biased toward polar residues. 2 stretches are compositionally biased toward low complexity: residues 120–146 (SSSS…PSTP) and 281–342 (VGQP…SADT). The segment covering 344 to 354 (QYASTSASSSE) has biased composition (polar residues). A compositionally biased stretch (low complexity) spans 364–378 (AATESEAQSSSQLQS). The 9aaTAD; inactive signature appears at 465–473 (ISWQTVQVQ). 3 C2H2-type zinc fingers span residues 645 to 669 (HVCH…LRWH), 675 to 699 (FICN…RRTH), and 705 to 727 (FECP…VKTH).

Belongs to the Sp1 C2H2-type zinc-finger protein family. Expressed in many tissues.

The protein resides in the nucleus. Functionally, binds to GT and GC boxes promoters elements. Probable transcriptional activator. Required for normal male reproductive behavior. In Mus musculus (Mouse), this protein is Transcription factor Sp4 (Sp4).